Here is a 983-residue protein sequence, read N- to C-terminus: Inner tegument protein (983 aa).

Residues Leu-474–Pro-983 are interaction with large tegument protein. The disordered stretch occupies residues Pro-902 to Glu-932. Positions Met-914 to Ser-923 are enriched in basic and acidic residues.

This sequence belongs to the herpesviridae inner tegument protein family. As to quaternary structure, interacts (via C-terminus) with the large tegument protein/LTP (via N-terminus).

The protein resides in the virion tegument. It is found in the host cytoplasm. The protein localises to the host nucleus. It localises to the host Golgi apparatus. Its subcellular location is the host trans-Golgi network. Its function is as follows. Plays an essential role in cytoplasmic secondary envelopment during viral egress. Interacts with the capsid via the large tegument protein/LTP and participates in its transport to the host trans-Golgi network (TGN) where secondary envelopment occurs. Modulates tegumentation and capsid accumulation at the viral assembly complex. This Homo sapiens (Human) protein is Inner tegument protein (UL47).